A 75-amino-acid chain; its full sequence is uncharacterized protein (75 aa).

The span at 1–14 (MNDNNDNNNNNKNI) shows a compositional bias: low complexity. Residues 1 to 30 (MNDNNDNNNNNKNIDNVDDDNDDNDKGKYK) are disordered.

This is an uncharacterized protein from Dictyostelium discoideum (Social amoeba).